The primary structure comprises 859 residues: Protein EFR3 homolog (859 aa).

Disordered regions lie at residues 638–657 and 697–724; these read DDPL…TPRT and RDGN…PDGY. Over residues 704 to 722 the composition is skewed to basic and acidic residues; sequence WQREDGQNFDSTDGRESPD.

The protein belongs to the EFR3 family.

This Caenorhabditis briggsae protein is Protein EFR3 homolog.